We begin with the raw amino-acid sequence, 382 residues long: Flap endonuclease 1 (382 aa).

The tract at residues 1 to 104 is N-domain; sequence MGIKGLSQVI…GELEKRSERR (104 aa). D34 lines the Mg(2+) pocket. Residues R47 and R70 each contribute to the DNA site. Mg(2+) contacts are provided by D86, E158, E160, D179, and D181. The tract at residues 122–253 is I-domain; the sequence is EAEKFERRLV…KKAVELIRQH (132 aa). E158 is a DNA binding site. Residues G231 and D233 each contribute to the DNA site. Residue D233 participates in Mg(2+) binding. The segment at 336–344 is interaction with PCNA; the sequence is TQGRIDSFF. Residues 358-382 form a disordered region; the sequence is KRKAEEAEKAKKGAKKGGPPKKRAK. Residues 359-368 show a composition bias toward basic and acidic residues; that stretch reads RKAEEAEKAK. Basic residues predominate over residues 369-382; it reads KGAKKGGPPKKRAK.

It belongs to the XPG/RAD2 endonuclease family. FEN1 subfamily. Interacts with PCNA. Three molecules of crn-1 bind to one PCNA trimer with each molecule binding to one PCNA monomer. PCNA stimulates the nuclease activity without altering cleavage specificity. Interacts with cps-6. Requires Mg(2+) as cofactor. Phosphorylated. Phosphorylation upon DNA damage induces relocalization to the nuclear plasma.

The protein localises to the nucleus. It is found in the nucleolus. Its subcellular location is the nucleoplasm. It localises to the mitochondrion. Its function is as follows. Structure-specific nuclease with 5'-flap endonuclease and 5'-3' exonuclease activities involved in DNA replication and repair. During DNA replication, cleaves the 5'-overhanging flap structure that is generated by displacement synthesis when DNA polymerase encounters the 5'-end of a downstream Okazaki fragment. It enters the flap from the 5'-end and then tracks to cleave the flap base, leaving a nick for ligation. Also involved in the long patch base excision repair (LP-BER) pathway, by cleaving within the apurinic/apyrimidinic (AP) site-terminated flap. Acts as a genome stabilization factor that prevents flaps from equilibrating into structures that lead to duplications and deletions. Also possesses 5'-3' exonuclease activity on nicked or gapped double-stranded DNA, and exhibits RNase H activity. Also involved in replication and repair of rDNA and in repairing mitochondrial DNA. Can associate and cooperate with cps-6 to promote stepwise DNA fragmentation, utilizing the endonuclease activity of cps-6 and both of its own 5'-3' exonuclease activity and gap-dependent endonuclease activity. May play a critical role in switching the state of cells from DNA replication/repair to DNA degradation during apoptosis. This Caenorhabditis elegans protein is Flap endonuclease 1.